The following is a 169-amino-acid chain: Peptide methionine sulfoxide reductase MsrA (169 aa).

Residue Cys-10 is part of the active site.

This sequence belongs to the MsrA Met sulfoxide reductase family.

It catalyses the reaction L-methionyl-[protein] + [thioredoxin]-disulfide + H2O = L-methionyl-(S)-S-oxide-[protein] + [thioredoxin]-dithiol. The catalysed reaction is [thioredoxin]-disulfide + L-methionine + H2O = L-methionine (S)-S-oxide + [thioredoxin]-dithiol. In terms of biological role, has an important function as a repair enzyme for proteins that have been inactivated by oxidation. Catalyzes the reversible oxidation-reduction of methionine sulfoxide in proteins to methionine. The protein is Peptide methionine sulfoxide reductase MsrA of Streptococcus pyogenes serotype M28 (strain MGAS6180).